An 858-amino-acid polypeptide reads, in one-letter code: Large structural phosphoprotein (858 aa).

The interval 603–629 (DVSRGGKGNSRDLYSGGNAEKKETSGK) is disordered.

It belongs to the herpesviridae large structural phosphoprotein family. In terms of assembly, homotetramer. Interacts with the major capsid protein. 180 tegument protein pU11 tetramers bind to the virion capsid. In terms of processing, phosphorylated at multiple sites.

Its subcellular location is the virion tegument. This is Large structural phosphoprotein (U11) from Homo sapiens (Human).